Consider the following 318-residue polypeptide: Protein-L-histidine N-pros-methyltransferase (318 aa).

Residues 1–18 form the signal peptide; it reads MRLLAGWLCLSLASVWLA. Asn35 carries an N-linked (GlcNAc...) asparagine glycan. Glu174, Asn210, and Tyr295 together coordinate S-adenosyl-L-homocysteine.

Belongs to the METTL9 family.

It localises to the endoplasmic reticulum. The protein resides in the mitochondrion. It carries out the reaction L-histidyl-[protein] + S-adenosyl-L-methionine = N(pros)-methyl-L-histidyl-[protein] + S-adenosyl-L-homocysteine + H(+). In terms of biological role, protein-histidine N-methyltransferase that specifically catalyzes 1-methylhistidine (pros-methylhistidine) methylation of target proteins. Specifically methylates the second His of proteins with a His-x-His (HxH) motif (where 'x' is preferably a small amino acid), while exploiting the first one as a recognition signature. Catalyzes methylation of target proteins such as S100A9, NDUFB3, SLC39A5, SLC39A7, ARMC6 and DNAJB12; 1-methylhistidine modification may affect the binding of zinc and other metals to its target proteins. Constitutes the main methyltransferase for the 1-methylhistidine modification in cell. The protein is Protein-L-histidine N-pros-methyltransferase of Homo sapiens (Human).